The following is a 226-amino-acid chain: Leucyl/phenylalanyl-tRNA--protein transferase (226 aa).

Belongs to the L/F-transferase family.

The protein localises to the cytoplasm. The catalysed reaction is N-terminal L-lysyl-[protein] + L-leucyl-tRNA(Leu) = N-terminal L-leucyl-L-lysyl-[protein] + tRNA(Leu) + H(+). The enzyme catalyses N-terminal L-arginyl-[protein] + L-leucyl-tRNA(Leu) = N-terminal L-leucyl-L-arginyl-[protein] + tRNA(Leu) + H(+). It catalyses the reaction L-phenylalanyl-tRNA(Phe) + an N-terminal L-alpha-aminoacyl-[protein] = an N-terminal L-phenylalanyl-L-alpha-aminoacyl-[protein] + tRNA(Phe). Its function is as follows. Functions in the N-end rule pathway of protein degradation where it conjugates Leu, Phe and, less efficiently, Met from aminoacyl-tRNAs to the N-termini of proteins containing an N-terminal arginine or lysine. This chain is Leucyl/phenylalanyl-tRNA--protein transferase, found in Pseudomonas aeruginosa (strain ATCC 15692 / DSM 22644 / CIP 104116 / JCM 14847 / LMG 12228 / 1C / PRS 101 / PAO1).